The following is a 150-amino-acid chain: 3-hydroxyacyl-[acyl-carrier-protein] dehydratase FabZ (150 aa).

His-53 is an active-site residue.

Belongs to the thioester dehydratase family. FabZ subfamily.

Its subcellular location is the cytoplasm. It carries out the reaction a (3R)-hydroxyacyl-[ACP] = a (2E)-enoyl-[ACP] + H2O. Involved in unsaturated fatty acids biosynthesis. Catalyzes the dehydration of short chain beta-hydroxyacyl-ACPs and long chain saturated and unsaturated beta-hydroxyacyl-ACPs. This Proteus mirabilis (strain HI4320) protein is 3-hydroxyacyl-[acyl-carrier-protein] dehydratase FabZ.